A 480-amino-acid chain; its full sequence is MDYLPMFARLEGRPVLLVGGGEVALRKARLLLAAGARLTLVSPEIEPEFAEFAGRFTHLVERFTPAHLAGQLLVVAATDNLEVNALVYQSANQLGLFVNVVDDPKRSSFIFPSIIDRSPLMVAVSSGGKAPVLVRLLRERLESLLPRHLGGLTELSGRVRDKAKQVLSSISDRRRFWERAFASNTLAGLIEKQDWQSAETWLNDGLDKAQSEVGEVVLVGAGPGDPGLLTLKALQQIQQAEVVLYDQLVSPEILDLVRRDATLVSVGKKAGAHSVPQEETNRLLVEYARAGNRVVRLKGGDPFMFGCGGEELEVLAAEGIPFSVVPGITAAAGATAYAGIPLTHRDHAQSAVFITGHCQKEGKEPDWQQLAVTQQTLVIYMGLMRSEHIQQQLVSHGRSCTTPIAIIEWGTTARQRVLTGTLAELAVLAQQAVSPSLIVIGEVVSLRKQLAWFGEKSGEKRDVQAGTDMNGCDLKLVNLA.

Residues 1-202 (MDYLPMFARL…QDWQSAETWL (202 aa)) form a precorrin-2 dehydrogenase /sirohydrochlorin ferrochelatase region. Residues 22-23 (EV) and 43-44 (PE) each bind NAD(+). Serine 126 is modified (phosphoserine). The uroporphyrinogen-III C-methyltransferase stretch occupies residues 214-480 (GEVVLVGAGP…GCDLKLVNLA (267 aa)). Proline 223 provides a ligand contact to S-adenosyl-L-methionine. Aspartate 246 functions as the Proton acceptor in the catalytic mechanism. Lysine 268 functions as the Proton donor in the catalytic mechanism. S-adenosyl-L-methionine contacts are provided by residues 299–301 (GGD), 329–330 (TA), methionine 381, and glycine 410.

This sequence in the N-terminal section; belongs to the precorrin-2 dehydrogenase / sirohydrochlorin ferrochelatase family. It in the C-terminal section; belongs to the precorrin methyltransferase family.

It carries out the reaction uroporphyrinogen III + 2 S-adenosyl-L-methionine = precorrin-2 + 2 S-adenosyl-L-homocysteine + H(+). It catalyses the reaction precorrin-2 + NAD(+) = sirohydrochlorin + NADH + 2 H(+). The catalysed reaction is siroheme + 2 H(+) = sirohydrochlorin + Fe(2+). It participates in cofactor biosynthesis; adenosylcobalamin biosynthesis; precorrin-2 from uroporphyrinogen III: step 1/1. The protein operates within cofactor biosynthesis; adenosylcobalamin biosynthesis; sirohydrochlorin from precorrin-2: step 1/1. It functions in the pathway porphyrin-containing compound metabolism; siroheme biosynthesis; precorrin-2 from uroporphyrinogen III: step 1/1. Its pathway is porphyrin-containing compound metabolism; siroheme biosynthesis; siroheme from sirohydrochlorin: step 1/1. It participates in porphyrin-containing compound metabolism; siroheme biosynthesis; sirohydrochlorin from precorrin-2: step 1/1. Multifunctional enzyme that catalyzes the SAM-dependent methylations of uroporphyrinogen III at position C-2 and C-7 to form precorrin-2 via precorrin-1. Then it catalyzes the NAD-dependent ring dehydrogenation of precorrin-2 to yield sirohydrochlorin. Finally, it catalyzes the ferrochelation of sirohydrochlorin to yield siroheme. This chain is Siroheme synthase 2, found in Aeromonas salmonicida (strain A449).